The chain runs to 242 residues: UPF0173 metal-dependent hydrolase APE_1117 (242 aa).

Belongs to the UPF0173 family.

This chain is UPF0173 metal-dependent hydrolase APE_1117, found in Aeropyrum pernix (strain ATCC 700893 / DSM 11879 / JCM 9820 / NBRC 100138 / K1).